The chain runs to 173 residues: CASP-like protein 3A1 (173 aa).

A topological domain (cytoplasmic) is located at residue methionine 1. A helical transmembrane segment spans residues 2-22 (VDIALRSAVVAFMVVSLSAMF). The Extracellular segment spans residues 23-48 (TSTQHSEVHIIGFSIPVSLRWNRSQP). Residue asparagine 44 is glycosylated (N-linked (GlcNAc...) asparagine). The chain crosses the membrane as a helical span at residues 49-69 (FEFLVVVELLICAYAFVQFVY). Topologically, residues 70-84 (QSVVLAKNAVPTRRC) are cytoplasmic. Residues 85–105 (IWVQLAADQVCAYLVLAAAAA) form a helical membrane-spanning segment. Over 106 to 140 (AAGASRTNKSGFQSLGMQNIKVPGVCIVLDKFCNR) the chain is Extracellular. Residue asparagine 113 is glycosylated (N-linked (GlcNAc...) asparagine). The helical transmembrane segment at 141–161 (ATIAIIFTLLAAGASGISVTL) threads the bilayer. Topologically, residues 162–173 (DVYMLTLTYYMG) are cytoplasmic.

The protein belongs to the Casparian strip membrane proteins (CASP) family. Homodimer and heterodimers.

Its subcellular location is the cell membrane. The chain is CASP-like protein 3A1 from Pteridium aquilinum subsp. aquilinum (Bracken fern).